We begin with the raw amino-acid sequence, 303 residues long: UDP-3-O-acyl-N-acetylglucosamine deacetylase (303 aa).

The Zn(2+) site is built by histidine 78, histidine 237, and aspartate 241. The active-site Proton donor is the histidine 264.

It belongs to the LpxC family. Requires Zn(2+) as cofactor.

It catalyses the reaction a UDP-3-O-[(3R)-3-hydroxyacyl]-N-acetyl-alpha-D-glucosamine + H2O = a UDP-3-O-[(3R)-3-hydroxyacyl]-alpha-D-glucosamine + acetate. It participates in glycolipid biosynthesis; lipid IV(A) biosynthesis; lipid IV(A) from (3R)-3-hydroxytetradecanoyl-[acyl-carrier-protein] and UDP-N-acetyl-alpha-D-glucosamine: step 2/6. Its function is as follows. Catalyzes the hydrolysis of UDP-3-O-myristoyl-N-acetylglucosamine to form UDP-3-O-myristoylglucosamine and acetate, the committed step in lipid A biosynthesis. The chain is UDP-3-O-acyl-N-acetylglucosamine deacetylase from Xanthomonas oryzae pv. oryzae (strain MAFF 311018).